Consider the following 246-residue polypeptide: MRVKVIDADAFSYIFRTLEEFIDEITLDFTSDGLKIRGIDPSRVTFIDILIPAGYFEEYNVEKEEKVGVKLEDFTDVLKTVTKNDSLYLETDENQNIKVTLDGVYERTFTFPSIVASEIETPNLNLEFPFKAKALTVTFTDIIDEIEDIGGDSITFKAEGGKLYLSANSDMGSSTIELSTENGGLLESEGGDAESVYGLEYVVNTSKMRKPSDTVEIAFGSQIPLKLRYNLPQGGYADFYIAPRAE.

It belongs to the PCNA family. As to quaternary structure, the subunits circularize to form a toroid; DNA passes through its center. Replication factor C (RFC) is required to load the toroid on the DNA. Forms dimeric complexes with PCNA1 and PCNA2, and trimeric complexes with PCNA123 and PCNA323; does not form homotrimers. Crystal structures show a heterotetramer of 2 PCNA2 and 2 PCNA3, which would be large enough to clamp a Holliday junction.

Its function is as follows. Sliding clamp subunit that acts as a moving platform for DNA processing. Responsible for tethering the catalytic subunit of DNA polymerase and other proteins to DNA during high-speed replication. Both trimeric complexes inhibit DNA ligase and both 3'-5' and 5'-3' activity of Hel308 (Hjm) helicase, but stimulate Hjc, the Holliday junction cleavage enzyme. This chain is DNA polymerase sliding clamp 3, found in Sulfurisphaera tokodaii (strain DSM 16993 / JCM 10545 / NBRC 100140 / 7) (Sulfolobus tokodaii).